Reading from the N-terminus, the 453-residue chain is DNA repair protein RadA (453 aa).

A C4-type zinc finger spans residues Cys-10–Cys-27. Residue Gly-95–Ser-102 coordinates ATP. The short motif at Lys-251–Gly-255 is the RadA KNRFG motif element. The segment at Asp-350–Ser-453 is lon-protease-like.

It belongs to the RecA family. RadA subfamily.

Its function is as follows. DNA-dependent ATPase involved in processing of recombination intermediates, plays a role in repairing DNA breaks. Stimulates the branch migration of RecA-mediated strand transfer reactions, allowing the 3' invading strand to extend heteroduplex DNA faster. Binds ssDNA in the presence of ADP but not other nucleotides, has ATPase activity that is stimulated by ssDNA and various branched DNA structures, but inhibited by SSB. Does not have RecA's homology-searching function. This chain is DNA repair protein RadA, found in Streptococcus pyogenes serotype M3 (strain ATCC BAA-595 / MGAS315).